The chain runs to 228 residues: Ephrin-A5 (228 aa).

A signal peptide spans 1–20 (MLHVEMLTLLFLVLWMCVFS). The Ephrin RBD domain maps to 29–162 (ADRYAVYWNS…KLKVFVRPTN (134 aa)). Asn-37 carries N-linked (GlcNAc...) asparagine glycosylation. 2 disulfide bridges follow: Cys-62-Cys-102 and Cys-90-Cys-151. An N-linked (GlcNAc...) asparagine; atypical glycan is attached at Asn-162. A disordered region spans residues 186-205 (EPADDTVHESAEPSRGENAA). The span at 190-200 (DTVHESAEPSR) shows a compositional bias: basic and acidic residues. The GPI-anchor amidated asparagine moiety is linked to residue Asn-203. Residues 204–228 (AAQTPRIPSRLLAILLFLLAMLLTL) constitute a propeptide, removed in mature form.

It belongs to the ephrin family. In terms of assembly, binds to the receptor tyrosine kinases EPHA2, EPHA3 and EPHB1. Forms a ternary EFNA5-EPHA3-ADAM10 complex mediating EFNA5 extracellular domain shedding by ADAM10 which regulates the EFNA5-EPHA3 complex internalization and function. Binds to EPHB2. Interacts with EPHA8; activates EPHA8. In terms of tissue distribution, expressed in myogenic progenitor cells.

It localises to the cell membrane. Its subcellular location is the membrane. It is found in the caveola. In terms of biological role, cell surface GPI-bound ligand for Eph receptors, a family of receptor tyrosine kinases which are crucial for migration, repulsion and adhesion during neuronal, vascular and epithelial development. Binds promiscuously Eph receptors residing on adjacent cells, leading to contact-dependent bidirectional signaling into neighboring cells. The signaling pathway downstream of the receptor is referred to as forward signaling while the signaling pathway downstream of the ephrin ligand is referred to as reverse signaling. Induces compartmentalized signaling within a caveolae-like membrane microdomain when bound to the extracellular domain of its cognate receptor. This signaling event requires the activity of the Fyn tyrosine kinase. Activates the EPHA3 receptor to regulate cell-cell adhesion and cytoskeletal organization. With the receptor EPHA2 may regulate lens fiber cells shape and interactions and be important for lens transparency maintenance. May function actively to stimulate axon fasciculation. The interaction of EFNA5 with EPHA5 also mediates communication between pancreatic islet cells to regulate glucose-stimulated insulin secretion. Cognate/functional ligand for EPHA7, their interaction regulates brain development modulating cell-cell adhesion and repulsion. The protein is Ephrin-A5 (Efna5) of Mus musculus (Mouse).